A 282-amino-acid polypeptide reads, in one-letter code: MRTTISQLKEMKQNKQKIAMLTAYDYPTAQILDKAGIPAILVGDSLGMVVLGYDSTVSVTMEDMLHHLKAVVRGSQKAMVIADMPFMTYHLSPEQALLNAGRFMQEGGAQAVKLEGGVNVADKVKRIVDCGIPVMGHIGLTPQSVNQLSGFKVQGKTLTAALALLEDARALEKAGAFAIVLETMPAELAAMITAAVSIPTIGIGAGENCDGQVQVVSDMLGMFTDFVPKHTKKYADLNGIISKAVSGYVTEVAKGEFPTLKESFTLDKKVLEELKKCVSSEQ.

Mg(2+)-binding residues include D44 and D83. 3-methyl-2-oxobutanoate contacts are provided by residues 44–45, D83, and K113; that span reads DS. E115 contacts Mg(2+). E182 serves as the catalytic Proton acceptor.

Belongs to the PanB family. In terms of assembly, homodecamer; pentamer of dimers. Mg(2+) serves as cofactor.

The protein localises to the cytoplasm. It catalyses the reaction 3-methyl-2-oxobutanoate + (6R)-5,10-methylene-5,6,7,8-tetrahydrofolate + H2O = 2-dehydropantoate + (6S)-5,6,7,8-tetrahydrofolate. It functions in the pathway cofactor biosynthesis; (R)-pantothenate biosynthesis; (R)-pantoate from 3-methyl-2-oxobutanoate: step 1/2. Functionally, catalyzes the reversible reaction in which hydroxymethyl group from 5,10-methylenetetrahydrofolate is transferred onto alpha-ketoisovalerate to form ketopantoate. This is 3-methyl-2-oxobutanoate hydroxymethyltransferase from Dehalococcoides mccartyi (strain ATCC BAA-2266 / KCTC 15142 / 195) (Dehalococcoides ethenogenes (strain 195)).